Reading from the N-terminus, the 816-residue chain is Subtilisin-like protease SBT2.6 (816 aa).

The signal sequence occupies residues 1–19 (MDIGCKVLVFFTCFLTVTA). A propeptide spans 20 to 126 (EIYIVTMEGE…VDRDWKVRKL (107 aa)) (activation peptide). One can recognise an Inhibitor I9 domain in the interval 22–124 (YIVTMEGEPI…KSVDRDWKVR (103 aa)). The 553-residue stretch at 120–672 (DWKVRKLTTH…SGHVNPSAAL (553 aa)) folds into the Peptidase S8 domain. Catalysis depends on charge relay system residues Asp160 and His235. In terms of domain architecture, PA spans 418–492 (DCQKPEVLNK…SCIPGILITD (75 aa)). Asn504 and Asn578 each carry an N-linked (GlcNAc...) asparagine glycan. The Charge relay system role is filled by Ser597. Asn702 carries N-linked (GlcNAc...) asparagine glycosylation.

This sequence belongs to the peptidase S8 family.

The protein localises to the secreted. The polypeptide is Subtilisin-like protease SBT2.6 (Arabidopsis thaliana (Mouse-ear cress)).